The sequence spans 79 residues: D-alanyl carrier protein (79 aa).

Positions 1-76 (MKEQIFDIIE…KIAARVQEKT (76 aa)) constitute a Carrier domain. The residue at position 34 (Ser-34) is an O-(pantetheine 4'-phosphoryl)serine.

It belongs to the DltC family. In terms of processing, 4'-phosphopantetheine is transferred from CoA to a specific serine of apo-DCP.

It is found in the cytoplasm. Its pathway is cell wall biogenesis; lipoteichoic acid biosynthesis. Its function is as follows. Carrier protein involved in the D-alanylation of lipoteichoic acid (LTA). The loading of thioester-linked D-alanine onto DltC is catalyzed by D-alanine--D-alanyl carrier protein ligase DltA. The DltC-carried D-alanyl group is further transferred to cell membrane phosphatidylglycerol (PG) by forming an ester bond, probably catalyzed by DltD. D-alanylation of LTA plays an important role in modulating the properties of the cell wall in Gram-positive bacteria, influencing the net charge of the cell wall. This chain is D-alanyl carrier protein, found in Lactococcus lactis subsp. cremoris (strain SK11).